The sequence spans 526 residues: Plant intracellular Ras-group-related LRR protein 5 (526 aa).

LRR repeat units lie at residues 229–252, 253–275, 276–297, 298–321, 323–344, 346–367, 368–390, 391–414, 416–437, 438–463, and 465–484; these read LSSL…IGGL, ISLT…IGDL, LNLV…SFNR, LIHL…IGSL, SLKK…ISGC, SMEE…VGKL, STLE…MSSM, ANLK…CYAK, LVKL…LIGN, LEKL…TLSN, and RVLQ…ITEK. Residues 485–492 carry the GVYW; degenerate motif; that stretch reads GAQAVVQY.

The protein belongs to the SHOC2 family. Widely expressed but preferentially in roots.

Functionally, leucine-rich repeat protein that likely mediates protein interactions, possibly in the context of signal transduction. The protein is Plant intracellular Ras-group-related LRR protein 5 (PIRL5) of Arabidopsis thaliana (Mouse-ear cress).